The chain runs to 140 residues: ATP synthase epsilon chain (140 aa).

The protein belongs to the ATPase epsilon chain family. F-type ATPases have 2 components, CF(1) - the catalytic core - and CF(0) - the membrane proton channel. CF(1) has five subunits: alpha(3), beta(3), gamma(1), delta(1), epsilon(1). CF(0) has three main subunits: a, b and c.

The protein localises to the cell inner membrane. Its function is as follows. Produces ATP from ADP in the presence of a proton gradient across the membrane. The chain is ATP synthase epsilon chain from Neisseria meningitidis serogroup C / serotype 2a (strain ATCC 700532 / DSM 15464 / FAM18).